A 926-amino-acid polypeptide reads, in one-letter code: Alpha-aminoadipic semialdehyde synthase, mitochondrial (926 aa).

The N-terminal 27 residues, 1–27 (MLRAQRPRLARLRACLSRGLHHKPVMA), are a transit peptide targeting the mitochondrion. The lysine-ketoglutarate reductase stretch occupies residues 28–455 (LRREDVNAWE…DAVITSNGLL (428 aa)). N6-acetyllysine is present on residues lysine 48, lysine 52, and lysine 56. Residue lysine 93 is modified to N6-acetyllysine; alternate. Position 93 is an N6-succinyllysine; alternate (lysine 93). Residue lysine 128 is modified to N6-acetyllysine. At lysine 138 the chain carries N6-acetyllysine; alternate. Residue lysine 138 is modified to N6-succinyllysine; alternate. Position 274 is an N6-succinyllysine (lysine 274). Lysine 286 bears the N6-acetyllysine; alternate mark. Lysine 286 is subject to N6-succinyllysine; alternate. Position 333 is an N6-succinyllysine (lysine 333). An N6-acetyllysine; alternate modification is found at lysine 458. At lysine 458 the chain carries N6-succinyllysine; alternate. The interval 477–926 (MSTKKKVLVL…VFNTQSTIKL (450 aa)) is saccharopine dehydrogenase. Positions 488, 512, and 516 each coordinate NAD(+). N6-acetyllysine; alternate occurs at positions 523 and 535. N6-succinyllysine; alternate is present on residues lysine 523 and lysine 535. NAD(+) contacts are provided by leucine 554, alanine 576, and serine 577. 577 to 578 (SY) is a binding site for L-saccharopine. Lysine 584 carries the post-translational modification N6-acetyllysine; alternate. Residue lysine 584 is modified to N6-succinyllysine; alternate. Leucine 603, aspartate 604, and proline 605 together coordinate NAD(+). Aspartate 604 contacts L-saccharopine. Arginine 703 is a binding site for L-saccharopine. Lysine 707 carries the post-translational modification N6-acetyllysine. 724-726 (TLR) provides a ligand contact to L-saccharopine. Lysine 732 bears the N6-succinyllysine mark. Lysine 739 is modified (N6-acetyllysine). Lysine 761 is modified (N6-acetyllysine; alternate). At lysine 761 the chain carries N6-succinyllysine; alternate. Lysine 778 and lysine 780 each carry N6-acetyllysine.

It in the N-terminal section; belongs to the AlaDH/PNT family. The protein in the C-terminal section; belongs to the saccharopine dehydrogenase family. In terms of assembly, homotetramer. In terms of tissue distribution, highly expressed in kidney and liver, very low expression is seen in heart, brain, spleen, lung, skeletal muscle and testis.

It localises to the mitochondrion. The catalysed reaction is L-saccharopine + NADP(+) + H2O = L-lysine + 2-oxoglutarate + NADPH + H(+). It carries out the reaction L-saccharopine + NAD(+) + H2O = (S)-2-amino-6-oxohexanoate + L-glutamate + NADH + H(+). It functions in the pathway amino-acid degradation; L-lysine degradation via saccharopine pathway; glutaryl-CoA from L-lysine: step 1/6. Its pathway is amino-acid degradation; L-lysine degradation via saccharopine pathway; glutaryl-CoA from L-lysine: step 2/6. Its function is as follows. Bifunctional enzyme that catalyzes the first two steps in lysine degradation. The sequence is that of Alpha-aminoadipic semialdehyde synthase, mitochondrial from Mus musculus (Mouse).